We begin with the raw amino-acid sequence, 232 residues long: 5'-methylthioadenosine/S-adenosylhomocysteine nucleosidase (232 aa).

Residue E14 is the Proton acceptor of the active site. Substrate is bound by residues G80, V154, and 175–176; that span reads ME. Residue D199 is the Proton donor of the active site.

Belongs to the PNP/UDP phosphorylase family. MtnN subfamily.

The enzyme catalyses S-adenosyl-L-homocysteine + H2O = S-(5-deoxy-D-ribos-5-yl)-L-homocysteine + adenine. It catalyses the reaction S-methyl-5'-thioadenosine + H2O = 5-(methylsulfanyl)-D-ribose + adenine. The catalysed reaction is 5'-deoxyadenosine + H2O = 5-deoxy-D-ribose + adenine. The protein operates within amino-acid biosynthesis; L-methionine biosynthesis via salvage pathway; S-methyl-5-thio-alpha-D-ribose 1-phosphate from S-methyl-5'-thioadenosine (hydrolase route): step 1/2. Catalyzes the irreversible cleavage of the glycosidic bond in both 5'-methylthioadenosine (MTA) and S-adenosylhomocysteine (SAH/AdoHcy) to adenine and the corresponding thioribose, 5'-methylthioribose and S-ribosylhomocysteine, respectively. Also cleaves 5'-deoxyadenosine, a toxic by-product of radical S-adenosylmethionine (SAM) enzymes, into 5-deoxyribose and adenine. The sequence is that of 5'-methylthioadenosine/S-adenosylhomocysteine nucleosidase from Actinobacillus pleuropneumoniae serotype 5b (strain L20).